A 362-amino-acid chain; its full sequence is Glutaminyl-peptide cyclotransferase (362 aa).

The first 35 residues, 1–35, serve as a signal peptide directing secretion; that stretch reads MAGSEDKRVVGTLHLLLLQATVLSLTAGNLSLVSA. 2 N-linked (GlcNAc...) asparagine glycosylation sites follow: N29 and N50. C140 and C165 are oxidised to a cystine. D160 provides a ligand contact to Zn(2+). E202 functions as the Proton acceptor in the catalytic mechanism. E203 provides a ligand contact to Zn(2+). Catalysis depends on D249, which acts as the Proton acceptor. Position 331 (H331) interacts with Zn(2+).

Belongs to the glutaminyl-peptide cyclotransferase family.

Its subcellular location is the secreted. It catalyses the reaction N-terminal L-glutaminyl-[peptide] = N-terminal 5-oxo-L-prolyl-[peptide] + NH4(+). Its function is as follows. Responsible for the biosynthesis of pyroglutamyl peptides. Has a bias against acidic and tryptophan residues adjacent to the N-terminal glutaminyl residue and a lack of importance of chain length after the second residue. In Mus musculus (Mouse), this protein is Glutaminyl-peptide cyclotransferase (Qpct).